The following is a 140-amino-acid chain: Large ribosomal subunit protein uL14x/uL14z/uL14y (140 aa).

The protein belongs to the universal ribosomal protein uL14 family.

The polypeptide is Large ribosomal subunit protein uL14x/uL14z/uL14y (RPL23A) (Arabidopsis thaliana (Mouse-ear cress)).